The following is a 227-amino-acid chain: Orotidine 5'-phosphate decarboxylase (227 aa).

Substrate is bound by residues D8, K30, 57–66 (DLKFHDIPNT), T116, R177, Q186, G206, and R207. K59 (proton donor) is an active-site residue.

The protein belongs to the OMP decarboxylase family. Type 1 subfamily. Homodimer.

It catalyses the reaction orotidine 5'-phosphate + H(+) = UMP + CO2. Its pathway is pyrimidine metabolism; UMP biosynthesis via de novo pathway; UMP from orotate: step 2/2. Functionally, catalyzes the decarboxylation of orotidine 5'-monophosphate (OMP) to uridine 5'-monophosphate (UMP). The polypeptide is Orotidine 5'-phosphate decarboxylase (Acinetobacter baylyi (strain ATCC 33305 / BD413 / ADP1)).